The primary structure comprises 264 residues: Glutamate racemase (264 aa).

Substrate is bound by residues 10 to 11 (DS) and 42 to 43 (YG). C73 (proton donor/acceptor) is an active-site residue. 74 to 75 (NT) is a binding site for substrate. The Proton donor/acceptor role is filled by C183. 184–185 (TH) serves as a coordination point for substrate.

It belongs to the aspartate/glutamate racemases family. In terms of assembly, homodimer.

The enzyme catalyses L-glutamate = D-glutamate. The protein operates within cell wall biogenesis; peptidoglycan biosynthesis. Its function is as follows. Provides the (R)-glutamate required for cell wall biosynthesis. The sequence is that of Glutamate racemase from Streptococcus pyogenes serotype M1.